The following is a 117-amino-acid chain: Large ribosomal subunit protein uL18 (117 aa).

This sequence belongs to the universal ribosomal protein uL18 family. In terms of assembly, part of the 50S ribosomal subunit; part of the 5S rRNA/L5/L18/L25 subcomplex. Contacts the 5S and 23S rRNAs.

Its function is as follows. This is one of the proteins that bind and probably mediate the attachment of the 5S RNA into the large ribosomal subunit, where it forms part of the central protuberance. The chain is Large ribosomal subunit protein uL18 from Francisella tularensis subsp. tularensis (strain FSC 198).